We begin with the raw amino-acid sequence, 251 residues long: NAD kinase (251 aa).

Asp-51 serves as the catalytic Proton acceptor. Residues Asp-51–Gly-52, Lys-56, Asn-113–Glu-114, Lys-124, His-140, Asp-142, Thr-153–Ser-158, and Ala-177 contribute to the NAD(+) site.

The protein belongs to the NAD kinase family. A divalent metal cation is required as a cofactor.

It localises to the cytoplasm. It carries out the reaction NAD(+) + ATP = ADP + NADP(+) + H(+). In terms of biological role, involved in the regulation of the intracellular balance of NAD and NADP, and is a key enzyme in the biosynthesis of NADP. Catalyzes specifically the phosphorylation on 2'-hydroxyl of the adenosine moiety of NAD to yield NADP. This is NAD kinase from Thermosipho melanesiensis (strain DSM 12029 / CIP 104789 / BI429).